We begin with the raw amino-acid sequence, 479 residues long: MGEYERTVFTRRITGVETEYGITCVGDNSRRRLGADEAARYMFRPVVEEWGSSNVFIPNGARLYLDVGSHPEYASAECDSLSQLIAYDRAGDKIVDQLAQRAETALATEGIGGRVYLFKNNLDSLGNSYGCHENYLVSRDVVLKTLGRQLLPFLITRQLICGAGSIQDGQFQVSQRADHVWEGVSSATTRSRPIINTRDEPHADSHRFRRLHVIVGDSNMSETTCALKIGSTQLVLEMIEAGALSHDLELSNEIAAIREISRDITGMAPVPLKAGTSMPAIEIQRRYAEKALCWLEQRGDTEGTPNAEMHKVVSLWLDTISAIESNDLQALSRDIDWAIKLSLLRRAQRRIGCSESDFTHPKLAQLDLAYHDIRAGRGVFPVLESKQLVNRWINDTDIEQATRIAPSTTRAALRGEFLTAAKKLQAPISADWLRLKVNRPEPQIIELTDPFENTDDRVDQLISYMRNHAASYSTDTAIS.

Glu17 lines the Mg(2+) pocket. Residue Arg62 coordinates ATP. Tyr64 is a binding site for Mg(2+). Asp66 functions as the Proton acceptor in the catalytic mechanism. Glu72 contacts Mg(2+). ATP-binding residues include Ser75 and Trp432.

This sequence belongs to the Pup ligase/Pup deamidase family. Pup-conjugating enzyme subfamily.

It carries out the reaction ATP + [prokaryotic ubiquitin-like protein]-L-glutamate + [protein]-L-lysine = ADP + phosphate + N(6)-([prokaryotic ubiquitin-like protein]-gamma-L-glutamyl)-[protein]-L-lysine.. The protein operates within protein degradation; proteasomal Pup-dependent pathway. It participates in protein modification; protein pupylation. Catalyzes the covalent attachment of the prokaryotic ubiquitin-like protein modifier Pup to the proteasomal substrate proteins, thereby targeting them for proteasomal degradation. This tagging system is termed pupylation. The ligation reaction involves the side-chain carboxylate of the C-terminal glutamate of Pup and the side-chain amino group of a substrate lysine. The chain is Pup--protein ligase from Corynebacterium diphtheriae (strain ATCC 700971 / NCTC 13129 / Biotype gravis).